Reading from the N-terminus, the 261-residue chain is Nickel import ATP-binding protein NikD (261 aa).

Residues 6–248 (LRIEGLTIAT…PRHDATRALV (243 aa)) enclose the ABC transporter domain. ATP is bound at residue 41 to 48 (GASGSGKS).

The protein belongs to the ABC transporter superfamily. Nickel importer (TC 3.A.1.5.3) family. The complex is composed of two ATP-binding proteins (NikD and NikE), two transmembrane proteins (NikB and NikC) and a solute-binding protein (NikA).

Its subcellular location is the cell inner membrane. It carries out the reaction Ni(2+)(out) + ATP + H2O = Ni(2+)(in) + ADP + phosphate + H(+). In terms of biological role, part of the ABC transporter complex NikABCDE involved in nickel import. Responsible for energy coupling to the transport system. The sequence is that of Nickel import ATP-binding protein NikD from Rhodospirillum rubrum (strain ATCC 11170 / ATH 1.1.1 / DSM 467 / LMG 4362 / NCIMB 8255 / S1).